The sequence spans 881 residues: MRFSHFLKYNAVPEWQNHYMDYSELKNLIYTLQTDELQVGDNEEGFGAGKSSNITDRFKNKFSFKNAKEDTSSGMNKDAGIVEETIELRELPTAQTVAAKPSPFRRMKEKIFYKRRSSSASSVSSTANENLQLDTYDTFVGDLTAEKQKVDDFYKRTEAKFYDKFDALVKDLKKIGVIEYDIDDDTLFNEPIASTNDEVPPLDLDDDEDDDEFYDDQSNIEDNTALLHHSQYNIKSQKKSLLKKSIVNLYIDLCQLKSFIELNRIGFAKITKKSDKVLHLNTRTELIESEQFFKDTYAFQAETIELLNSKISQLVTFYARITDRPHNISHSKQELKSYLHDHIVWERSNTWKDMLGLLSQADELTPKETEYNANKLVGKLDLEYYRWPLPRPINLKFTSINNVALPKLFFTKKAYKIYFIILVTGLLLGIKTFNDAAQHRCMALVECVAFLWASEAIPLHITAFLVPLLVVLFKVLKTSDGAIMSAASASSEILAAMWSSTIMILLAGFTLGEVLAQYNIAKVLASWLLAFAGCKPRNVLLMAMCVVFFLSMWISNVAAPVLTYSLLSPLLDAMDADSPFAQALVLGVALAANIGGMSSPISSPQNIISMSYLKPYGIGWGQFFAVALPSGILAMLLVWILLFTTFKMNKTKLEKFKPIKTKFTVKQYYIITVTVATILLWCVESQIEGAFGSSGQIAIIPIVLFFGTGLLSTQDLNAFPWSIVILAMGGIALGKAVSSSGLLSTIAKALQKKIENDGVFAILCIFGILMLVVGTFVSHTVSAIIIIPLVQEVGDKLGNPKAAPILVFGCALLSSCGMGLASSGFPNVTAISKVDRKGDRYLSVMTFLTRGVPASILAFLCVITLGYGIMASVVKGNATSA.

An SPX domain is found at 1-288 (MRFSHFLKYN…HLNTRTELIE (288 aa)). Transmembrane regions (helical) follow at residues 417 to 437 (IYFI…NDAA), 456 to 476 (AIPL…FKVL), 493 to 513 (ILAA…TLGE), 514 to 534 (VLAQ…FAGC), 539 to 559 (VLLM…NVAA), 581 to 601 (AQAL…SSPI), 663 to 683 (FTVK…LWCV), 691 to 711 (FGSS…TGLL), 718 to 738 (AFPW…KAVS), 758 to 778 (GVFA…TFVS), 805 to 825 (ILVF…SSGF), and 854 to 874 (ASIL…ASVV).

The protein belongs to the CitM (TC 2.A.11) transporter family.

The protein localises to the membrane. Functionally, low-affinity phosphate transporter involved in the control of cellular phosphate levels. This chain is Low-affinity phosphate transporter PHO90 (PHO90), found in Saccharomyces cerevisiae (strain ATCC 204508 / S288c) (Baker's yeast).